Reading from the N-terminus, the 336-residue chain is Serpentine receptor class delta-51 (336 aa).

The next 7 helical transmembrane spans lie at 14-34 (VYYS…LFIM), 48-68 (YLFN…FAQC), 93-113 (CFVT…SILL), 133-153 (ATTF…QLLT), 188-208 (AAII…LIAF), 237-257 (GLLI…SYFL), and 275-295 (IFGS…VLPY).

It belongs to the nematode receptor-like protein srd family.

It localises to the membrane. The protein is Serpentine receptor class delta-51 (srd-51) of Caenorhabditis elegans.